A 62-amino-acid chain; its full sequence is uncharacterized protein (62 aa).

A coiled-coil region spans residues 28–61; the sequence is KIESTHPEIAKKLKEAAEKYREVEEILKKAVDMV.

This is an uncharacterized protein from Archaeoglobus fulgidus (strain ATCC 49558 / DSM 4304 / JCM 9628 / NBRC 100126 / VC-16).